We begin with the raw amino-acid sequence, 214 residues long: Capsid assembly scaffolding protein (214 aa).

Residues 36–105 adopt a coiled-coil conformation; that stretch reads KEKFDAVNSE…QQLKYEHALE (70 aa). Residues 154-190 form a disordered region; the sequence is KGTEPNGGVQGTPPPGKGADLGGLPTKKNPFKQGPDF.

The protein belongs to the SPP1-like scaffolding protein family. Homodimer. Interacts with the capsid protein gp13.

Its function is as follows. Scaffolding protein involved in the icosahedric procapsid assembly. Coassembles with the capsid proteins to form the procapsid, in which the scaffolding protein is found within the external shell of icosahedrally arranged capsid protein subunits. In a subsequent step the scaffolding protein molecules are released from the procapsid. This is Capsid assembly scaffolding protein from Bacillus phage SPP1 (Bacteriophage SPP1).